A 1250-amino-acid polypeptide reads, in one-letter code: DNA topoisomerase 3-alpha (1250 aa).

The Toprim domain maps to 27-171 (KYLNVAEKND…NISVYRATFS (145 aa)). Residues 189–610 (DKRQSDAVDV…EQIAKYKQAY (422 aa)) enclose the Topo IA-type catalytic domain. The active-site O-(5'-phospho-DNA)-tyrosine intermediate is Y356. Residues 769 to 835 (RGGGGGPGPG…GTGGGGLGGG (67 aa)) are compositionally biased toward gly residues. 2 disordered regions span residues 769–899 (RGGG…GLDE) and 953–1035 (NGGT…TVLC). Over residues 840–865 (PGGESKKSATKKPPNEPKPKKTKEPK) the composition is skewed to basic and acidic residues. The span at 866 to 886 (AAPNKKTSSKSSGSIRSFFTS) shows a compositional bias: low complexity. Positions 956-965 (TMPTESNGDQ) are enriched in polar residues. Composition is skewed to basic and acidic residues over residues 966–994 (QLDK…RERA) and 1012–1021 (PRWDSVERDS). The segment covering 1022–1033 (TPPSSVPESETV) has biased composition (low complexity). Zn(2+) is bound by residues C1035, C1038, C1061, and C1067. The GRF-type 1 zinc-finger motif lies at 1035–1076 (CTGCQQPARQNTVRKNGPNLGRLYYKCPKPDECNFFQWADEP). Residues 1069-1150 (FFQWADEPPS…TATPGDGEEV (82 aa)) form a disordered region. A compositionally biased stretch (polar residues) spans 1079-1101 (SAKSKNSTGSAPQSTTSWGSNRV). A compositionally biased stretch (low complexity) spans 1106-1134 (SIQQSNSQRGQSSMRSNSSSTVTITQTKT). Residues C1152, C1154, C1177, and C1184 each coordinate Zn(2+). The GRF-type 2 zinc finger occupies 1152–1193 (CNCGQLASQLTVRKDGPNQGRPFYACPTREKSCGFFKWGDED). A disordered region spans residues 1188 to 1231 (KWGDEDQNQGASSTSWGSANRNPPGRSQPTAITSDGPKTRRCGL). Residues 1195–1220 (NQGASSTSWGSANRNPPGRSQPTAIT) are compositionally biased toward polar residues.

The protein belongs to the type IA topoisomerase family.

It carries out the reaction ATP-independent breakage of single-stranded DNA, followed by passage and rejoining.. In terms of biological role, releases the supercoiling and torsional tension of DNA introduced during the DNA replication and transcription by transiently cleaving and rejoining one strand of the DNA duplex. Introduces a single-strand break via transesterification at a target site in duplex DNA. The scissile phosphodiester is attacked by the catalytic tyrosine of the enzyme, resulting in the formation of a DNA-(5'-phosphotyrosyl)-enzyme intermediate and the expulsion of a 3'-OH DNA strand. The free DNA strand than undergoes passage around the unbroken strand thus removing DNA supercoils. Finally, in the religation step, the DNA 3'-OH attacks the covalent intermediate to expel the active-site tyrosine and restore the DNA phosphodiester backbone. Weakly relaxes negative supercoils and displays a distinct preference for binding single-stranded DNA. The chain is DNA topoisomerase 3-alpha (Top3alpha) from Drosophila melanogaster (Fruit fly).